We begin with the raw amino-acid sequence, 498 residues long: Glycerol kinase (498 aa).

Thr12 is an ADP binding site. ATP contacts are provided by Thr12, Thr13, and Ser14. Thr12 contacts sn-glycerol 3-phosphate. Arg16 provides a ligand contact to ADP. The sn-glycerol 3-phosphate site is built by Arg82, Glu83, Tyr135, and Asp245. Glycerol contacts are provided by Arg82, Glu83, Tyr135, Asp245, and Gln246. 2 residues coordinate ADP: Thr267 and Gly310. Residues Thr267, Gly310, Gln314, and Gly411 each coordinate ATP. ADP is bound by residues Gly411 and Asn415.

It belongs to the FGGY kinase family. Homotetramer and homodimer (in equilibrium).

It carries out the reaction glycerol + ATP = sn-glycerol 3-phosphate + ADP + H(+). It functions in the pathway polyol metabolism; glycerol degradation via glycerol kinase pathway; sn-glycerol 3-phosphate from glycerol: step 1/1. Its activity is regulated as follows. Activated by phosphorylation and inhibited by fructose 1,6-bisphosphate (FBP). In terms of biological role, key enzyme in the regulation of glycerol uptake and metabolism. Catalyzes the phosphorylation of glycerol to yield sn-glycerol 3-phosphate. This chain is Glycerol kinase, found in Clostridium botulinum (strain Eklund 17B / Type B).